Here is a 186-residue protein sequence, read N- to C-terminus: ADP-ribosylation factor-like protein 6 (186 aa).

G2 carries N-myristoyl glycine lipidation. Residues G24–T31, T50, D69–Q73, G72, N130–D133, and A164 contribute to the GTP site. Residues T31 and T50 each coordinate Mg(2+).

Belongs to the small GTPase superfamily. Arf family. In terms of assembly, interacts with SEC61B, ARL6IP1, ARL6IP2, ARL6IP3, ARL6IP4 ARL6IP5 and ARL6IP6. Interacts (GTP-bound form) with the BBSome a complex that contains BBS1, BBS2, BBS4, BBS5, BBS7, BBS8/TTC8, BBS9 and BBIP10. Interacts (GTP-free form) with IFT27.

It is found in the cell projection. The protein localises to the cilium membrane. Its subcellular location is the cytoplasm. The protein resides in the cytoskeleton. It localises to the cilium axoneme. It is found in the cilium basal body. Involved in membrane protein trafficking at the base of the ciliary organelle. Mediates recruitment onto plasma membrane of the BBSome complex which would constitute a coat complex required for sorting of specific membrane proteins to the primary cilia. Together with BBS1, is necessary for correct trafficking of PKD1 to primary cilia. Together with the BBSome complex and LTZL1, controls SMO ciliary trafficking and contributes to the sonic hedgehog (SHH) pathway regulation. May regulate cilia assembly and disassembly and subsequent ciliary signaling events such as the Wnt signaling cascade. Isoform 2 may be required for proper retinal function and organization. The polypeptide is ADP-ribosylation factor-like protein 6 (ARL6) (Homo sapiens (Human)).